The chain runs to 965 residues: MKSKHNKEKKSGFSYKETLNLLKTDFSMRANSVIREPEIHEFWSRNKIDLELGSTNSGKNFTLHDGPPYANGSLHMGHALNKVLKDIINKYKTLQGFKVHFIPGWDCHGLPIELKVLQSLKSNERRNLDSLGLRKKATDYAKIQINNQLEGFKRWGIWGDWDNPYLTLKKNYESAQIGVFGKMFLNGYIYRGLKPVHWSPSSRTALAEAELEYPEEHFSKSIYVSLNITKLSDAVLLKLEEKDLRNKLLSSLNKLFIAIWTTTPWTIPGNEAVAINPRINYVFASDQNGNIYLFARDLISEICEKLDREFNVLLDVKGSLLEGLEYKHPTKNKFCNIVIGGDYITTESGTGIVHTAPGHGMDDFNVGQKYQLPITCIVDEKGNLNKHAEKFCGLNVLKDANDLIIEDLEKNNLLLLKENYKHRYPYDWRTKKPTIFRATEQWFASVEGFRSSALKAIEDVEWMPKTGKKRIYSMVVGRGDWCISRQRSWGVPIPVFYEKEGKGVLINTETINHIKSLFEEYGADVWWEWDEKKLLPEKYRNESDRWEKGLDTMDVWFDSGSSWAAVCEQREELQYPADLYLEGSDQHRGWFQSSLLTSVAVNNKPPYKTVLTHGFALDENGRKMSKSLGNVVDPNIIINGGPNQKIQPAYGADVLRLWVSSVDYSVDVPIGSNILKQLSDVYRKVRNTARYLLGNIHDYDPALEEIDIDQLPLLDQWMLNRLVEVSDEVTIAYENYEFSKFFQILQSFCVVDLSNFYLDIAKDRLYVSAKTQFRRRSCQFVMSRIVENLAVIISPVLCHMAEDIWQNIPYSTIEKSVFERRWPKFPESWLNPELNEHISNLRTLRVEINKAIEGCRTQQMIGAALETEVNYLPENEFFKNSLSWLDKFGNKEVDLYRDWLIVSDFNIVNNLSKDCLSIDNNELGKIQILKAKGLKCDRCWHYQNITVKGIENTKLCERCANIINL.

The short motif at 68-78 is the 'HIGH' region element; sequence PYANGSLHMGH. Glu-582 is an L-isoleucyl-5'-AMP binding site. Residues 623–627 carry the 'KMSKS' region motif; sequence KMSKS. Lys-626 is an ATP binding site. 4 residues coordinate Zn(2+): Cys-936, Cys-939, Cys-956, and Cys-959.

Belongs to the class-I aminoacyl-tRNA synthetase family. IleS type 1 subfamily. As to quaternary structure, monomer. Zn(2+) is required as a cofactor.

It localises to the cytoplasm. The catalysed reaction is tRNA(Ile) + L-isoleucine + ATP = L-isoleucyl-tRNA(Ile) + AMP + diphosphate. In terms of biological role, catalyzes the attachment of isoleucine to tRNA(Ile). As IleRS can inadvertently accommodate and process structurally similar amino acids such as valine, to avoid such errors it has two additional distinct tRNA(Ile)-dependent editing activities. One activity is designated as 'pretransfer' editing and involves the hydrolysis of activated Val-AMP. The other activity is designated 'posttransfer' editing and involves deacylation of mischarged Val-tRNA(Ile). This is Isoleucine--tRNA ligase from Prochlorococcus marinus subsp. pastoris (strain CCMP1986 / NIES-2087 / MED4).